The following is a 167-amino-acid chain: Alpha-crystallin A chain (167 aa).

M1 carries the post-translational modification N-acetylmethionine. The 112-residue stretch at 47–158 folds into the sHSP domain; that stretch reads YYRQSFFRGF…GERPIPVSRE (112 aa). 4 residues coordinate Zn(2+): H94, E96, H101, and H148. The tract at residues 143 to 167 is disordered; it reads SLDSSHGERPIPVSREEKPTSAPSS. Residues 147–161 show a composition bias toward basic and acidic residues; sequence SHGERPIPVSREEKP. S156 carries O-linked (GlcNAc) serine glycosylation.

It belongs to the small heat shock protein (HSP20) family. Heteropolymer composed of three CRYAA and one CRYAB subunits. Inter-subunit bridging via zinc ions enhances stability, which is crucial as there is no protein turn over in the lens. Can also form homodimers and homotetramers (dimers of dimers) which serve as the building blocks of homooligomers. Within homooligomers, the zinc-binding motif is created from residues of 3 different molecules. His-94 and Glu-96 from one molecule are ligands of the zinc ion, and His-101 and His-148 residues from additional molecules complete the site with tetrahedral coordination geometry.

Its subcellular location is the cytoplasm. The protein localises to the nucleus. Its function is as follows. Contributes to the transparency and refractive index of the lens. May act as a chaperone, preventing aggregation of various proteins under a wide range of stress conditions. The chain is Alpha-crystallin A chain (CRYAA) from Pelophylax lessonae (Pool frog).